Consider the following 147-residue polypeptide: Ponticulin-like protein C3 (147 aa).

Positions 1–20 (MKFTKSLLLLIVAVFASSNA) are cleaved as a signal peptide. Residue N118 is the site of GPI-like-anchor amidated asparagine attachment. N118 carries an N-linked (GlcNAc...) asparagine glycan. The propeptide at 119–147 (SSESDSSDSTRIGASFALFALALLSMLAL) is removed in mature form.

Belongs to the ponticulin family. Post-translationally, the GPI-like-anchor contains a phosphoceramide group, rather than a phosphatidyl group.

It is found in the cell membrane. The sequence is that of Ponticulin-like protein C3 (ponC3) from Dictyostelium discoideum (Social amoeba).